The following is a 1187-amino-acid chain: Serine/threonine-protein kinase SIK3 homolog (1187 aa).

The span at 1–15 shows a compositional bias: low complexity; that stretch reads MAAVSSGAAAAAGIP. The tract at residues 1 to 41 is disordered; sequence MAAVSSGAAAAAGIPNPNPNRERPQQQQQQQPASAALHPVA. One can recognise a Protein kinase domain in the interval 59 to 310; sequence YEMERTIGKG…MEQICKNKWM (252 aa). ATP is bound by residues 65-73 and lysine 88; that span reads IGKGNFAVV. Catalysis depends on aspartate 181, which acts as the Proton acceptor. Residue threonine 214 is modified to Phosphothreonine. Serine 218 is subject to Phosphoserine. The UBA domain occupies 337-377; sequence LINEQVLMAMAEMGFDRERTLQSLHADSYDHYSATYSLLSD. Disordered stretches follow at residues 548–587, 697–776, and 1060–1092; these read LKRP…VQRS, IQPS…PPGS, and CADA…GALQ. Over residues 570–581 the composition is skewed to acidic residues; the sequence is VDEEGSDAEPDP. Polar residues predominate over residues 739–749; that stretch reads VQYQHGSALYQ.

This sequence belongs to the protein kinase superfamily. CAMK Ser/Thr protein kinase family. SNF1 subfamily. Requires Mg(2+) as cofactor.

It catalyses the reaction L-seryl-[protein] + ATP = O-phospho-L-seryl-[protein] + ADP + H(+). The catalysed reaction is L-threonyl-[protein] + ATP = O-phospho-L-threonyl-[protein] + ADP + H(+). The chain is Serine/threonine-protein kinase SIK3 homolog from Danio rerio (Zebrafish).